We begin with the raw amino-acid sequence, 88 residues long: Small ribosomal subunit protein bS20 (88 aa).

It belongs to the bacterial ribosomal protein bS20 family.

Functionally, binds directly to 16S ribosomal RNA. The polypeptide is Small ribosomal subunit protein bS20 (Bartonella tribocorum (strain CIP 105476 / IBS 506)).